Consider the following 209-residue polypeptide: Regulator of G-protein signaling 1 (209 aa).

The RGS domain maps to 85–200 (SLEKLLANQT…LKSDIYLNLL (116 aa)).

As to quaternary structure, interacts with GNAI1 and GNAQ. In terms of tissue distribution, detected in peripheral blood monocytes. Expression is relatively low in B-cells and chronic lymphocytic leukemia B-cells; however, in other types of malignant B-cell such as non-Hodgkin lymphoma and hairy cell leukemia, expression is constitutively high.

It is found in the cell membrane. The protein localises to the cytoplasm. Its subcellular location is the cytosol. Regulates G protein-coupled receptor signaling cascades, including signaling downstream of the N-formylpeptide chemoattractant receptors and leukotriene receptors. Inhibits B cell chemotaxis toward CXCL12. Inhibits signal transduction by increasing the GTPase activity of G protein alpha subunits thereby driving them into their inactive GDP-bound form. This is Regulator of G-protein signaling 1 (RGS1) from Homo sapiens (Human).